The sequence spans 220 residues: Cell division protein DedD (220 aa).

A helical transmembrane segment spans residues 9–29; the sequence is LVGTIVLVALGVIVLPGLLDG. 2 disordered regions span residues 46–84 and 97–137; these read KAGD…AAPS and FEPE…EEKA. Low complexity predominate over residues 57–70; sequence PAATQALPTQPPEG. Positions 100–109 are enriched in pro residues; the sequence is EPAPVAPPKP. 2 stretches are compositionally biased toward basic and acidic residues: residues 110–119 and 127–137; these read KPVEPPKPKV and PEPKPVVEEKA. The SPOR domain maps to 138-217; it reads APTGKAYVVQ…SGLSGVVMGY (80 aa).

This sequence belongs to the DedD family.

It localises to the cell inner membrane. Non-essential cell division protein that could be required for efficient cell constriction. The sequence is that of Cell division protein DedD from Escherichia coli (strain K12).